The chain runs to 86 residues: uncharacterized protein (86 aa).

A helical transmembrane segment spans residues 4-24 (LFFTLIAFVAIILLMSIGFII).

It is found in the membrane. This is an uncharacterized protein from Haemophilus influenzae (strain ATCC 51907 / DSM 11121 / KW20 / Rd).